Consider the following 141-residue polypeptide: Large ribosomal subunit protein uL11 (141 aa).

It belongs to the universal ribosomal protein uL11 family. In terms of assembly, part of the ribosomal stalk of the 50S ribosomal subunit. Interacts with L10 and the large rRNA to form the base of the stalk. L10 forms an elongated spine to which L12 dimers bind in a sequential fashion forming a multimeric L10(L12)X complex. In terms of processing, one or more lysine residues are methylated.

Its function is as follows. Forms part of the ribosomal stalk which helps the ribosome interact with GTP-bound translation factors. The polypeptide is Large ribosomal subunit protein uL11 (Trichlorobacter lovleyi (strain ATCC BAA-1151 / DSM 17278 / SZ) (Geobacter lovleyi)).